We begin with the raw amino-acid sequence, 115 residues long: Flagellar transcriptional regulator FlhD (115 aa).

The protein belongs to the FlhD family. Homodimer; disulfide-linked. Forms a heterohexamer composed of two FlhC and four FlhD subunits. Each FlhC binds a FlhD dimer, forming a heterotrimer, and a hexamer assembles by dimerization of two heterotrimers.

The protein resides in the cytoplasm. Its function is as follows. Functions in complex with FlhC as a master transcriptional regulator that regulates transcription of several flagellar and non-flagellar operons by binding to their promoter region. Activates expression of class 2 flagellar genes, including fliA, which is a flagellum-specific sigma factor that turns on the class 3 genes. Also regulates genes whose products function in a variety of physiological pathways. In Edwardsiella ictaluri (strain 93-146), this protein is Flagellar transcriptional regulator FlhD.